The primary structure comprises 443 residues: Probable D-serine dehydratase (443 aa).

K116 carries the N6-(pyridoxal phosphate)lysine modification.

This sequence belongs to the serine/threonine dehydratase family. DsdA subfamily. The cofactor is pyridoxal 5'-phosphate.

The enzyme catalyses D-serine = pyruvate + NH4(+). This is Probable D-serine dehydratase from Bacillus cereus (strain B4264).